The primary structure comprises 526 residues: O-phosphoserine--tRNA(Cys) ligase (526 aa).

Residues 189–191 (HMT), 234–236 (SAS), 276–277 (YY), and N319 each bind substrate.

Belongs to the class-II aminoacyl-tRNA synthetase family. O-phosphoseryl-tRNA(Cys) synthetase subfamily. Homotetramer. Interacts with SepCysS.

The enzyme catalyses tRNA(Cys) + O-phospho-L-serine + ATP = O-phospho-L-seryl-tRNA(Cys) + AMP + diphosphate. Catalyzes the attachment of O-phosphoserine (Sep) to tRNA(Cys). The protein is O-phosphoserine--tRNA(Cys) ligase of Methanocorpusculum labreanum (strain ATCC 43576 / DSM 4855 / Z).